We begin with the raw amino-acid sequence, 165 residues long: Putative 4-hydroxy-4-methyl-2-oxoglutarate aldolase (165 aa).

Substrate-binding positions include 80 to 83 (GGNL) and Arg-102. Asp-103 contacts a divalent metal cation.

This sequence belongs to the class II aldolase/RraA-like family. In terms of assembly, homotrimer. Requires a divalent metal cation as cofactor.

The enzyme catalyses 4-hydroxy-4-methyl-2-oxoglutarate = 2 pyruvate. It carries out the reaction oxaloacetate + H(+) = pyruvate + CO2. Its function is as follows. Catalyzes the aldol cleavage of 4-hydroxy-4-methyl-2-oxoglutarate (HMG) into 2 molecules of pyruvate. Also contains a secondary oxaloacetate (OAA) decarboxylase activity due to the common pyruvate enolate transition state formed following C-C bond cleavage in the retro-aldol and decarboxylation reactions. In Cupriavidus taiwanensis (strain DSM 17343 / BCRC 17206 / CCUG 44338 / CIP 107171 / LMG 19424 / R1) (Ralstonia taiwanensis (strain LMG 19424)), this protein is Putative 4-hydroxy-4-methyl-2-oxoglutarate aldolase.